Reading from the N-terminus, the 205-residue chain is uncharacterized protein (205 aa).

This is an uncharacterized protein from Sinorhizobium fredii (strain NBRC 101917 / NGR234).